The sequence spans 547 residues: Phosphomethylpyrimidine synthase (547 aa).

Substrate contacts are provided by residues N146, M175, Y204, H240, 260–262 (SRG), 301–304 (DGLR), and E340. Position 344 (H344) interacts with Zn(2+). Y367 is a binding site for substrate. H408 lines the Zn(2+) pocket. [4Fe-4S] cluster-binding residues include C488, C491, and C496.

This sequence belongs to the ThiC family. The cofactor is [4Fe-4S] cluster.

The catalysed reaction is 5-amino-1-(5-phospho-beta-D-ribosyl)imidazole + S-adenosyl-L-methionine = 4-amino-2-methyl-5-(phosphooxymethyl)pyrimidine + CO + 5'-deoxyadenosine + formate + L-methionine + 3 H(+). The protein operates within cofactor biosynthesis; thiamine diphosphate biosynthesis. Its function is as follows. Catalyzes the synthesis of the hydroxymethylpyrimidine phosphate (HMP-P) moiety of thiamine from aminoimidazole ribotide (AIR) in a radical S-adenosyl-L-methionine (SAM)-dependent reaction. This chain is Phosphomethylpyrimidine synthase, found in Mycobacterium bovis (strain ATCC BAA-935 / AF2122/97).